Reading from the N-terminus, the 86-residue chain is Small ribosomal subunit protein bS16 (86 aa).

The protein belongs to the bacterial ribosomal protein bS16 family.

The chain is Small ribosomal subunit protein bS16 from Syntrophotalea carbinolica (strain DSM 2380 / NBRC 103641 / GraBd1) (Pelobacter carbinolicus).